The sequence spans 129 residues: M-zodatoxin-Lt8l (129 aa).

Residues 1 to 20 (MKYFVVXXALVAAFACIAES) form the signal peptide. A propeptide spanning residues 21-60 (KPAESEHELAEVEEENELADLEDAVWLEDLADLSDLEETR) is cleaved from the precursor.

It belongs to the cationic peptide 06 (cytoinsectotoxin) family. Expressed by the venom gland.

The protein resides in the secreted. Its function is as follows. Insecticidal, cytolytic and antimicrobial peptide. Forms voltage-dependent, ion-permeable channels in membranes. At high concentration causes cell membrane lysis. The chain is M-zodatoxin-Lt8l (cit 1-12) from Lachesana tarabaevi (Spider).